A 444-amino-acid polypeptide reads, in one-letter code: UDP-N-acetylglucosamine 1-carboxyvinyltransferase (444 aa).

Phosphoenolpyruvate is bound at residue 22–23 (KN). Arg94 is a binding site for UDP-N-acetyl-alpha-D-glucosamine. Asp119 serves as the catalytic Proton donor. UDP-N-acetyl-alpha-D-glucosamine contacts are provided by Asp309 and Val331.

Belongs to the EPSP synthase family. MurA subfamily.

The protein resides in the cytoplasm. The enzyme catalyses phosphoenolpyruvate + UDP-N-acetyl-alpha-D-glucosamine = UDP-N-acetyl-3-O-(1-carboxyvinyl)-alpha-D-glucosamine + phosphate. It functions in the pathway cell wall biogenesis; peptidoglycan biosynthesis. Functionally, cell wall formation. Adds enolpyruvyl to UDP-N-acetylglucosamine. The protein is UDP-N-acetylglucosamine 1-carboxyvinyltransferase of Chlamydia trachomatis serovar D (strain ATCC VR-885 / DSM 19411 / UW-3/Cx).